The sequence spans 337 residues: Tryptophan--tRNA ligase (337 aa).

ATP contacts are provided by residues 11 to 13 and 19 to 20; these read QPT and GN. Positions 12–20 match the 'HIGH' region motif; that stretch reads PTGALHLGN. D135 contacts L-tryptophan. ATP is bound by residues 147–149, V191, and 200–204; these read GED and KMSKS. The short motif at 200–204 is the 'KMSKS' region element; sequence KMSKS.

Belongs to the class-I aminoacyl-tRNA synthetase family. Homodimer.

It is found in the cytoplasm. The enzyme catalyses tRNA(Trp) + L-tryptophan + ATP = L-tryptophyl-tRNA(Trp) + AMP + diphosphate + H(+). Catalyzes the attachment of tryptophan to tRNA(Trp). The polypeptide is Tryptophan--tRNA ligase (Parasynechococcus marenigrum (strain WH8102)).